A 267-amino-acid polypeptide reads, in one-letter code: Putative glycosyltransferase 63 (267 aa).

It belongs to the glycosyltransferase group 1 family. Glycosyltransferase 4 subfamily.

This is Putative glycosyltransferase 63 (SIFV0063) from Sulfolobus islandicus filamentous virus (isolate Iceland/Hveragerdi) (SIFV).